The following is a 332-amino-acid chain: Adenosine receptor A2b (332 aa).

Over 1–8 (MQLETQDA) the chain is Extracellular. The helical transmembrane segment at 9-33 (LYVALELAIAALSVAGNVLVCAAVG) threads the bilayer. Over 34 to 43 (TSSALQTPTN) the chain is Cytoplasmic. A helical transmembrane segment spans residues 44–67 (YFLVSLAAADVAVGLFAIPFAITI). The Extracellular segment spans residues 68 to 78 (SLGFCTDFHSC). A disulfide bridge connects residues C78 and C170. Residues 79–101 (LFLACFVLVLTQSSIFSLLAVAV) traverse the membrane as a helical segment. The Cytoplasmic portion of the chain corresponds to 102-121 (DRYLAIRVPLRYKSLVTGTR). A helical membrane pass occupies residues 122 to 144 (ARGVIAVLWVLAFGIGLTPFLGW). Residues 145 to 177 (NSKDSATNCTEPWDGTTNESCCLVKCLFENVVP) are Extracellular-facing. N-linked (GlcNAc...) asparagine glycosylation is found at N152 and N162. E173 serves as a coordination point for adenosine. A helical transmembrane segment spans residues 178 to 202 (MSYMVYFNFFGCVLPPLLIMLVIYI). Residues 203–234 (KIFMVACKQLQRTELVDHSRTVIQREIHAAKS) lie on the Cytoplasmic side of the membrane. A helical membrane pass occupies residues 235-258 (LAMIVGIFALCWLPVHAINCVTLF). N253 provides a ligand contact to adenosine. The Extracellular segment spans residues 259–266 (QPARAKDK). The helical transmembrane segment at 267 to 290 (PKWAMNMAILLSHASSVVNPIVYA) threads the bilayer. Adenosine-binding residues include S278 and H279. The Cytoplasmic segment spans residues 291–332 (YRNRDFRYTFHKIISRYVLCQTDVLKSGNGQAGTQSALDVGL). C310 is lipidated: S-palmitoyl cysteine.

It belongs to the G-protein coupled receptor 1 family.

Its subcellular location is the cell membrane. Functionally, receptor for adenosine. The activity of this receptor is mediated by G proteins which activate adenylyl cyclase. The sequence is that of Adenosine receptor A2b (ADORA2B) from Canis lupus familiaris (Dog).